We begin with the raw amino-acid sequence, 626 residues long: Chaperone protein HtpG (626 aa).

Residues 1–329 (MSEETLSFQA…SSDLPLNVSR (329 aa)) form an a; substrate-binding region. The b stretch occupies residues 330-549 (EMLQDDPRLR…EGAMSLHLQK (220 aa)). The tract at residues 550–626 (LLRQANQGSE…LTEVMGKGLI (77 aa)) is c.

Belongs to the heat shock protein 90 family. In terms of assembly, homodimer.

The protein localises to the cytoplasm. In terms of biological role, molecular chaperone. Has ATPase activity. The polypeptide is Chaperone protein HtpG (Rhodospirillum rubrum (strain ATCC 11170 / ATH 1.1.1 / DSM 467 / LMG 4362 / NCIMB 8255 / S1)).